The following is a 468-amino-acid chain: Immunoglobulin superfamily member 21 (468 aa).

The signal sequence occupies residues 1-24 (MQAAPSLRRASCLLLAAILDLARG). The Ig-like 1 domain maps to 25–132 (YLTVNIEPLP…RATREKVVLA (108 aa)). Cys46 and Cys116 are disulfide-bonded. N-linked (GlcNAc...) asparagine glycans are attached at residues Asn82, Asn165, and Asn407. The Ig-like 2 domain maps to 344–429 (PKIMMTPSRA…GSTDTHTRLI (86 aa)).

Interacts (Ig-like 1 domain) with NRXN2 (via Laminin G-like 1 domain) in a trans-interaction manner. As to expression, expressed in brain (at protein levels). Highly expressed in the pyramidal cell layer of the dorsal and ventral hippocampal CA1 and CA3 regions, layers 5 and 6 of the cortex, the thalamus and the pons and weakly expressed in the cerebellum. Expressed in neurons but not in glia.

The protein localises to the postsynaptic cell membrane. Functionally, involved in synaptic inhibition in the brain. Selectively regulates inhibitory presynaptic differentiation through interacting with presynaptic NRXN2. The protein is Immunoglobulin superfamily member 21 (Igsf21) of Mus musculus (Mouse).